The sequence spans 253 residues: 3-deoxy-manno-octulosonate cytidylyltransferase (253 aa).

Belongs to the KdsB family.

Its subcellular location is the cytoplasm. It catalyses the reaction 3-deoxy-alpha-D-manno-oct-2-ulosonate + CTP = CMP-3-deoxy-beta-D-manno-octulosonate + diphosphate. It functions in the pathway nucleotide-sugar biosynthesis; CMP-3-deoxy-D-manno-octulosonate biosynthesis; CMP-3-deoxy-D-manno-octulosonate from 3-deoxy-D-manno-octulosonate and CTP: step 1/1. The protein operates within bacterial outer membrane biogenesis; lipopolysaccharide biosynthesis. Functionally, activates KDO (a required 8-carbon sugar) for incorporation into bacterial lipopolysaccharide in Gram-negative bacteria. The chain is 3-deoxy-manno-octulosonate cytidylyltransferase from Pseudoalteromonas translucida (strain TAC 125).